The following is a 1284-amino-acid chain: DNA topoisomerase 2, mitochondrial (1284 aa).

A mitochondrion-targeting transit peptide spans 1-35 (MSKLLNNNNHKNLTNYLKFGKGIINNLNNKSKQVG). Residues Asn-183, Asn-212, 240–242 (GSN), and 253–260 (GRNGFGAK) contribute to the ATP site. Residues 445–447 (KKK) form an interaction with DNA region. An ATP-binding site is contributed by 478-480 (QSK). Residues 560-677 (CTLIITEGDS…NLLKRGFLVE (118 aa)) enclose the Toprim domain. Residues Glu-566, Asp-646, and Asp-648 each coordinate Mg(2+). One can recognise a Topo IIA-type catalytic domain in the interval 810 to 1232 (IPSLIDGLKP…DPKSLWTADL (423 aa)). The active-site O-(5'-phospho-DNA)-tyrosine intermediate is Tyr-900. The tract at residues 1245–1284 (EFQKKPLKTSSSSSFDVSSSSESAKLSSTRKSKTDKIKSK) is disordered. A compositionally biased stretch (low complexity) spans 1254–1271 (SSSSSFDVSSSSESAKLS).

This sequence belongs to the type II topoisomerase family. In terms of assembly, homodimer. It depends on Mg(2+) as a cofactor. The cofactor is Mn(2+). Ca(2+) is required as a cofactor.

The protein resides in the mitochondrion. The catalysed reaction is ATP-dependent breakage, passage and rejoining of double-stranded DNA.. Control of topological states of DNA by transient breakage and subsequent rejoining of DNA strands. Topoisomerase II makes double-strand breaks. This chain is DNA topoisomerase 2, mitochondrial (top2mt), found in Dictyostelium discoideum (Social amoeba).